The chain runs to 452 residues: Phosphoglucosamine mutase (452 aa).

The active-site Phosphoserine intermediate is the S103. S103, D243, D245, and D247 together coordinate Mg(2+). Residue S103 is modified to Phosphoserine.

Belongs to the phosphohexose mutase family. Mg(2+) is required as a cofactor. Activated by phosphorylation.

It catalyses the reaction alpha-D-glucosamine 1-phosphate = D-glucosamine 6-phosphate. Functionally, catalyzes the conversion of glucosamine-6-phosphate to glucosamine-1-phosphate. The sequence is that of Phosphoglucosamine mutase from Limosilactobacillus fermentum (strain NBRC 3956 / LMG 18251) (Lactobacillus fermentum).